Consider the following 440-residue polypeptide: Serine/threonine-protein kinase toxin HipA (440 aa).

Position 150 is a phosphoserine; by autocatalysis (serine 150). Residues 152-157 (AGAQEK), lysine 181, and 234-236 (ERF) each bind ATP. Catalysis depends on aspartate 309, which acts as the Proton acceptor. ATP contacts are provided by residues 311-314 (HAKN) and 331-332 (YD). The DNA-binding element occupies 379–382 (KVLR).

This sequence belongs to the HipA Ser/Thr kinase family. As to quaternary structure, forms a HipA(2)HipB(2) heterotetramer which can interact with a single operator on DNA. When 2 operators are present each HipB dimer contacts 1 HipA molecule, which are brought together by the DNA bend and dimerize, blocking the HipA active site and inactivating its toxic activity. Mutations present in allele hipA7 (G22S and D291A) decrease the affinity of HipA for HipB. Post-translationally, autophosphorylates intermolecularly on Ser-150; phosphorylated form not seen to bind ATP and no longer has kinase activity.

It catalyses the reaction L-seryl-[protein] + ATP = O-phospho-L-seryl-[protein] + ADP + H(+). It carries out the reaction L-threonyl-[protein] + ATP = O-phospho-L-threonyl-[protein] + ADP + H(+). With respect to regulation, once phosphorylated no longer has kinase activity. Its function is as follows. Toxic component of a type II toxin-antitoxin (TA) system, first identified by mutations that increase production of persister cells, a fraction of cells that are phenotypic variants not killed by antibiotics, which lead to multidrug tolerance. Persistence may be ultimately due to global remodeling of the persister cell's ribosomes. Phosphorylates Glu-tRNA-ligase (AC P04805, gltX, on 'Ser-239') in vivo. Phosphorylation of GltX prevents it from being charged, leading to an increase in uncharged tRNA(Glu). This induces amino acid starvation and the stringent response via RelA/SpoT and increased (p)ppGpp levels, which inhibits replication, transcription, translation and cell wall synthesis, reducing growth and leading to persistence and multidrug resistance. Once the level of HipA exceeds a threshold cells become dormant, and the length of dormancy is determined by how much HipA levels exceed the threshold. The hipA7 mutation (a double G22S D291A mutation) leads to increased generation of persister cells (cells that survive antibiotic treatment) probably by entering into a dormant state, as well as cold-sensitivity. Wild-type cells produce persisters at a frequency of 10(-6) to 10(-5) whereas hipA7 cells produce about 100-fold more persisters. hipA7 decreases the affinity for antitoxin HipB, leading to increased HipA levels and persistence; depending on the protein level, can be toxic enough to reduce cell growth or even kill cells. Generation of persister cells requires (p)ppGpp as cells lacking relA or relA/spoT generate fewer or no persister cells respectively compared to hipA7. The toxic effect of HipA is neutralized by its cognate antitoxin HipB. Also neutralized by overexpression of gltX. With HipB acts as a corepressor for transcription of the hipBA promoter; binding of HipA-HipB to DNA induces a 70 degree bend. This brings together and dimerizes 2 HipA molecules, which distorts the promoter region, preventing sigma-factor binding; additionally HipA and HipB would physically prevent RNA core polymerase from contacting the -35 promoter box. May play a role in biofilm formation. This chain is Serine/threonine-protein kinase toxin HipA (hipA), found in Escherichia coli (strain K12).